A 370-amino-acid chain; its full sequence is tRNA-specific 2-thiouridylase MnmA (370 aa).

ATP-binding positions include 11-18 (GMSGGVDS) and M37. Residues 97–99 (NPD) form an interaction with target base in tRNA region. C102 serves as the catalytic Nucleophile. Residues C102 and C199 are joined by a disulfide bond. G126 is a binding site for ATP. The segment at 149–151 (KDQ) is interaction with tRNA. Catalysis depends on C199, which acts as the Cysteine persulfide intermediate. Positions 307-308 (RY) are interaction with tRNA.

Belongs to the MnmA/TRMU family.

Its subcellular location is the cytoplasm. The catalysed reaction is S-sulfanyl-L-cysteinyl-[protein] + uridine(34) in tRNA + AH2 + ATP = 2-thiouridine(34) in tRNA + L-cysteinyl-[protein] + A + AMP + diphosphate + H(+). In terms of biological role, catalyzes the 2-thiolation of uridine at the wobble position (U34) of tRNA, leading to the formation of s(2)U34. In Staphylococcus carnosus (strain TM300), this protein is tRNA-specific 2-thiouridylase MnmA.